Consider the following 136-residue polypeptide: MSGQTSFYCGLLLVLLIQAQARPRSDDSLQTLSRLLEDEYGHYLPSDELNNEAQEMSPAASLPEFNADQSDLELPWDRESREIGGRPFRQEAVLARLLKDLSNNPLRFRGRSKKGPSRGCFGVKLDRIGAMSGLGC.

The signal sequence occupies residues 1-21 (MSGQTSFYCGLLLVLLIQAQA). A disulfide bond links cysteine 120 and cysteine 136.

Belongs to the natriuretic peptide family. CNP-115 is differentially processed to produce CNP-38 and CNP-39 in the heart and CNP-22 in the brain.

It localises to the secreted. Functionally, hormone which may be vasoactive and natriuretic. Has a cGMP-stimulating activity. In Triakis scyllium (Banded houndshark), this protein is C-type natriuretic peptide prohormone.